Consider the following 229-residue polypeptide: Potassium/proton antiporter CemA (229 aa).

4 helical membrane passes run phenylalanine 7–phenylalanine 27, isoleucine 114–leucine 134, isoleucine 154–isoleucine 174, and isoleucine 189–isoleucine 209.

This sequence belongs to the CemA family.

It is found in the plastid. The protein resides in the chloroplast inner membrane. The catalysed reaction is K(+)(in) + H(+)(out) = K(+)(out) + H(+)(in). Contributes to K(+)/H(+) antiport activity by supporting proton efflux to control proton extrusion and homeostasis in chloroplasts in a light-dependent manner to modulate photosynthesis. Prevents excessive induction of non-photochemical quenching (NPQ) under continuous-light conditions. Indirectly promotes efficient inorganic carbon uptake into chloroplasts. This chain is Potassium/proton antiporter CemA, found in Platanus occidentalis (Sycamore).